The sequence spans 355 residues: Lamassu protein LmuA (355 aa).

In terms of biological role, component of antiviral defense system Lamassu type II, composed of LmuA and LmuB. Expression of Lamassu type II in B.subtilis (strain BEST7003) confers resistance to phage SpBeta. May be a nuclease. The protein is Lamassu protein LmuA of Bacillus cereus (strain VD014).